Consider the following 419-residue polypeptide: Dual specificity mitogen-activated protein kinase kinase 7 (419 aa).

N-acetylalanine is present on Ala2. Residues 2-30 (AASSLEQKLSRLEAKLKQENREARRRIDL) adopt a coiled-coil conformation. Positions 18–30 (KQENREARRRIDL) are enriched in basic and acidic residues. Residues 18-77 (KQENREARRRIDLNLDISPQRPRPTLQLPLANDGGSRSPSSESSPQHPTPPSRPRHMLGL) are disordered. Residues 36 to 63 (PQRPRPTLQLPLANDGGSRSPSSESSPQ) are compositionally biased toward low complexity. The segment at 37 to 57 (QRPRPTLQLPLANDGGSRSPS) is d Domain. The 261-residue stretch at 120–380 (LENLGEMGSG…YNKLLEHSFI (261 aa)) folds into the Protein kinase domain. ATP contacts are provided by residues 126 to 134 (MGSGTCGQV) and Lys149. Catalysis depends on Asp243, which acts as the Proton acceptor. A Phosphoserine; by MAP3K modification is found at Ser271. Residue Thr275 is modified to Phosphothreonine; by MAP3K. The DVD domain stretch occupies residues 377-400 (HSFIKHYETLEVDVASWFKDVMAK). Ser411 bears the Phosphoserine mark.

The protein belongs to the protein kinase superfamily. STE Ser/Thr protein kinase family. MAP kinase kinase subfamily. Interacts with VRK2. Interacts (via its D domain) with its substrates MAPK8/JNK1, MAPK9/JNK2 and MAPK10/JNK3. Interacts (via its DVD domain) with MAP3Ks activators like MAP3K5/ASK1 and MAP3K1/MEKK1. Interacts with MAPK8IP1/JIP1, MAPK8IP2/JIP2 and MAPK8IP3/JIP3 scaffold proteins. Interacts with RASSF7, the interaction promotes phosphorylation. Found in a complex with SH3RF1, RAC1, MAP3K11/MLK3, MAPK8IP1/JIP1 and MAPK8/JNK1. Found in a complex with SH3RF1, RAC2, MAP3K7/TAK1, MAPK8IP1/JIP1, MAPK8/JNK1 and MAPK9/JNK2. Requires Mg(2+) as cofactor. Activated by phosphorylation on Ser-271 and Thr-275 by MAP kinase kinase kinases (MAP3Ks).

Its subcellular location is the nucleus. The protein localises to the cytoplasm. The catalysed reaction is L-seryl-[protein] + ATP = O-phospho-L-seryl-[protein] + ADP + H(+). The enzyme catalyses L-threonyl-[protein] + ATP = O-phospho-L-threonyl-[protein] + ADP + H(+). It carries out the reaction L-tyrosyl-[protein] + ATP = O-phospho-L-tyrosyl-[protein] + ADP + H(+). With respect to regulation, activated by phosphorylation by specific MAP kinase kinase kinases such as MAP3K1/MEKK1, MAP3K3/MEKK3, MAP3K11/MLK3 and MAP3K12/DLK. Functionally, dual specificity protein kinase which acts as an essential component of the MAP kinase signal transduction pathway. Essential component of the stress-activated protein kinase/c-Jun N-terminal kinase (SAP/JNK) signaling pathway. With MAP2K4/MKK4, is the one of the only known kinase to directly activate the stress-activated protein kinase/c-Jun N-terminal kinases MAPK8/JNK1, MAPK9/JNK2 and MAPK10/JNK3. MAP2K4/MKK4 and MAP2K7/MKK7 both activate the JNKs by phosphorylation, but they differ in their preference for the phosphorylation site in the Thr-Pro-Tyr motif. MAP2K4/MKK4 shows preference for phosphorylation of the Tyr residue and MAP2K7/MKK7 for the Thr residue. The monophosphorylation of JNKs on the Thr residue is sufficient to increase JNK activity indicating that MAP2K7/MKK7 is important to trigger JNK activity, while the additional phosphorylation of the Tyr residue by MAP2K4/MKK4 ensures optimal JNK activation. Has a specific role in JNK signal transduction pathway activated by pro-inflammatory cytokines. The MKK/JNK signaling pathway is also involved in mitochondrial death signaling pathway, including the release cytochrome c, leading to apoptosis. Part of a non-canonical MAPK signaling pathway, composed of the upstream MAP3K12 kinase and downstream MAP kinases MAPK1/ERK2 and MAPK3/ERK1, that enhances the AP-1-mediated transcription of APP in response to APOE. This is Dual specificity mitogen-activated protein kinase kinase 7 from Rattus norvegicus (Rat).